A 59-amino-acid polypeptide reads, in one-letter code: Photosystem II reaction center protein K (59 aa).

The propeptide occupies 1–22 (MLNIFSLIGLNSALYSSSCFFA). Residues 30–50 (FLSPIVDFMPVIPLLFFLLAF) traverse the membrane as a helical segment.

It belongs to the PsbK family. As to quaternary structure, PSII is composed of 1 copy each of membrane proteins PsbA, PsbB, PsbC, PsbD, PsbE, PsbF, PsbH, PsbI, PsbJ, PsbK, PsbL, PsbM, PsbT, PsbX, PsbY, PsbZ, Psb30/Ycf12, at least 3 peripheral proteins of the oxygen-evolving complex and a large number of cofactors. It forms dimeric complexes.

It localises to the plastid. The protein resides in the chloroplast thylakoid membrane. Its function is as follows. One of the components of the core complex of photosystem II (PSII). PSII is a light-driven water:plastoquinone oxidoreductase that uses light energy to abstract electrons from H(2)O, generating O(2) and a proton gradient subsequently used for ATP formation. It consists of a core antenna complex that captures photons, and an electron transfer chain that converts photonic excitation into a charge separation. The sequence is that of Photosystem II reaction center protein K from Silene latifolia (White campion).